The following is a 95-amino-acid chain: Secretoglobin family 1C member 1 (95 aa).

The signal sequence occupies residues 1–23; the sequence is MKGSSALLLVALSLLCVCGLTRA.

It belongs to the secretoglobin family.

The protein localises to the secreted. The sequence is that of Secretoglobin family 1C member 1 (Scgb1c1) from Mus musculus (Mouse).